We begin with the raw amino-acid sequence, 459 residues long: NADP-specific glutamate dehydrogenase (459 aa).

The active site involves Lys114.

It belongs to the Glu/Leu/Phe/Val dehydrogenases family. Homohexamer.

It catalyses the reaction L-glutamate + NADP(+) + H2O = 2-oxoglutarate + NH4(+) + NADPH + H(+). The chain is NADP-specific glutamate dehydrogenase (gdhA) from Emericella nidulans (strain FGSC A4 / ATCC 38163 / CBS 112.46 / NRRL 194 / M139) (Aspergillus nidulans).